Consider the following 540-residue polypeptide: Solute carrier family 22 member 7 (540 aa).

The next 12 membrane-spanning stretches (helical) occupy residues 21–41 (LVLLALPRFLLPMHFLLPIFM), 144–164 (VTSTCFFIGVLLGAVVYGYLS), 172–192 (LLLVAYVSTLALGLMSAASVN), 202–222 (LTGSALAGFTIIVLPLELEWL), 232–252 (VISTTFWTGGVLLLTLVGYLI), 257–277 (WLLLAATLPCVPGIISIWWVP), 344–364 (VSLCCMMMWFGVNFSYYGLTL), 378–398 (LLFGAVEVPSKITVFFLVRLV), 402–422 (LTEAGMLLATALTFGISLLVS), 429–449 (ITALVVIGKAFSEAAFTTAYL), 462–484 (TGMGFTALIGRLGASLAPLVVLL), and 488–510 (WLLLPKLAYGGISFLAACTVLLL).

Belongs to the major facilitator (TC 2.A.1) superfamily. Organic cation transporter (TC 2.A.1.19) family. Abundant expression in male and female kidney. In kidney, expressed at the brush border of the proximal tubule S3 segment (S3) in the outer stripe and medullary rays. In kidney, expression is higher in female than male. Also expressed in female liver.

The protein localises to the basolateral cell membrane. It is found in the apical cell membrane. Its subcellular location is the cell membrane. The catalysed reaction is orotate(out) + L-glutamate(in) = orotate(in) + L-glutamate(out). The enzyme catalyses 3',5'-cyclic GMP(in) = 3',5'-cyclic GMP(out). It catalyses the reaction GMP(in) = GMP(out). It carries out the reaction 2'-deoxyguanosine(in) = 2'-deoxyguanosine(out). The catalysed reaction is GDP(in) = GDP(out). The enzyme catalyses guanosine(in) = guanosine(out). It catalyses the reaction GTP(in) = GTP(out). It carries out the reaction 3',5'-cyclic AMP(in) = 3',5'-cyclic AMP(out). The catalysed reaction is creatinine(in) = creatinine(out). The enzyme catalyses prostaglandin E2(out) = prostaglandin E2(in). It catalyses the reaction 2-oxoglutarate(in) = 2-oxoglutarate(out). It carries out the reaction glutarate(in) = glutarate(out). The catalysed reaction is urate(out) = urate(in). The enzyme catalyses estrone 3-sulfate(out) = estrone 3-sulfate(in). Its function is as follows. Functions as a Na(+)-independent bidirectional multispecific transporter. Contributes to the renal and hepatic elimination of endogenous organic compounds from the systemic circulation into the urine and bile, respectively. Capable of transporting a wide range of purine and pyrimidine nucleobases, nucleosides, and nucleotides with cGMP, 2'deoxyguanosine and GMP being the preferred substrates. Functions as a pH- and chloride-independent cGMP bidirectional facilitative transporter that can regulate both intracellular and extracellular levels of cGMP and may be involved in cGMP signaling pathways. Mediates orotate/glutamate bidirectional exchange and most likely display a physiological role in hepatic release of glutamate into the blood. Involved in renal secretion and possible reabsorption of creatinine. Able to uptake prostaglandin E2 (PGE2) and may contribute to PGE2 renal excretion. Also transports alpha-ketoglutarate and urate. Unlike human hortolog, able to transport glutarate. Apart from the orotate/glutamate exchange, the counterions for the uptake of other SLC22A7/OAT2 substrates remain to be identified. The chain is Solute carrier family 22 member 7 from Mus musculus (Mouse).